Consider the following 259-residue polypeptide: 3-deoxy-manno-octulosonate cytidylyltransferase (259 aa).

Belongs to the KdsB family.

Its subcellular location is the cytoplasm. The catalysed reaction is 3-deoxy-alpha-D-manno-oct-2-ulosonate + CTP = CMP-3-deoxy-beta-D-manno-octulosonate + diphosphate. It participates in nucleotide-sugar biosynthesis; CMP-3-deoxy-D-manno-octulosonate biosynthesis; CMP-3-deoxy-D-manno-octulosonate from 3-deoxy-D-manno-octulosonate and CTP: step 1/1. The protein operates within bacterial outer membrane biogenesis; lipopolysaccharide biosynthesis. Functionally, activates KDO (a required 8-carbon sugar) for incorporation into bacterial lipopolysaccharide in Gram-negative bacteria. This is 3-deoxy-manno-octulosonate cytidylyltransferase from Protochlamydia amoebophila (strain UWE25).